A 988-amino-acid chain; its full sequence is Vacuolar sorting protein 18 (988 aa).

A CHCR repeat occupies 589-749; it reads NKNLNPRRLI…VVKQEKGAKR (161 aa). Positions 785 to 819 form a coiled coil; the sequence is KEAICSSLEDYNKQIEQLKEEMNDATRGADNIRND. An RING-type; degenerate zinc finger spans residues 836–886; the sequence is CGVCKRKILMMSGDFRMAQGYSSAGPLAPFYVFPCGHSFHAQCLITHVTSC.

Belongs to the VPS18 family. In terms of assembly, core component of at least two putative endosomal tethering complexes, the homotypic fusion and vacuole protein sorting (HOPS) complex and the class C core vacuole/endosome tethering (CORVET) complex. Their common core is composed of the class C Vps proteins VPS11, VCL1, VPS18 and VPS33, which in HOPS further associates with VPS39 and VPS41 and in CORVET with VPS3.

It localises to the endosome membrane. The protein localises to the vacuole membrane. Its subcellular location is the cytoplasm. Essential protein required during embryogenesis. Believed to act as a core component of the putative HOPS endosomal tethering complex and of the class C core vacuole/endosome tethering (CORVET) complex. CORVET is required for vacuolar transport of SYP22. HOPS is required for the central vacuole formation. Involved in root development. Plays a role in vesicle-mediated protein trafficking to lysosomal compartments including the endocytic membrane transport pathways. In Arabidopsis thaliana (Mouse-ear cress), this protein is Vacuolar sorting protein 18.